A 171-amino-acid chain; its full sequence is uncharacterized protein (171 aa).

This is an uncharacterized protein from Escherichia coli O157:H7.